Reading from the N-terminus, the 255-residue chain is Aliphatic sulfonates import ATP-binding protein SsuB (255 aa).

Positions 12–233 constitute an ABC transporter domain; the sequence is LLLNAVSKHY…RLGSVRLAEL (222 aa). 44-51 contacts ATP; it reads GRSGGGKS.

It belongs to the ABC transporter superfamily. Aliphatic sulfonates importer (TC 3.A.1.17.2) family. In terms of assembly, the complex is composed of two ATP-binding proteins (SsuB), two transmembrane proteins (SsuC) and a solute-binding protein (SsuA).

Its subcellular location is the cell inner membrane. It carries out the reaction ATP + H2O + aliphatic sulfonate-[sulfonate-binding protein]Side 1 = ADP + phosphate + aliphatic sulfonateSide 2 + [sulfonate-binding protein]Side 1.. Functionally, part of the ABC transporter complex SsuABC involved in aliphatic sulfonates import. Responsible for energy coupling to the transport system. This chain is Aliphatic sulfonates import ATP-binding protein SsuB, found in Escherichia coli O6:K15:H31 (strain 536 / UPEC).